Consider the following 335-residue polypeptide: MTIVIGFEGSANKIGIGIIKDGEVLSNPRRTYITPPGQGFLPGETAKHHRSVILTVLQEALDEAGLKAADIDCVAYTKGPGMGAPLVTVAIVARTVAQLWGKPLLGVNHCIGHIEMGRLITNAQNPTVLYVSGGNTQVIAYSERRYRIFGETIDIAVGNCLDRFARVIKISNDPSPGYNIEQMAKKGNKYIELPYTVKGMDVSFSGILSYIEDAAHKMLSTDQCTPEDLCFSLQETVFAMLVEITERAMAHCGSQEVLIVGGVGCNLRLQEMMGVMCKERGARIFATDESFCIDNGAMIAQAGWEMFRSGHVTELPDSWITQRYRTDEVEVTWRD.

3 residues coordinate a divalent metal cation: H109, H113, and Y130. Residues 130–134, D162, G177, E181, and N266 each bind substrate; that span reads YVSGG. Residue D294 coordinates a divalent metal cation.

The protein belongs to the KAE1 / TsaD family. In terms of assembly, component of the EKC/KEOPS complex composed of at least tp53rk, tprkb, osgep and lage3; the whole complex dimerizes. A divalent metal cation is required as a cofactor.

Its subcellular location is the cytoplasm. The protein localises to the nucleus. The catalysed reaction is L-threonylcarbamoyladenylate + adenosine(37) in tRNA = N(6)-L-threonylcarbamoyladenosine(37) in tRNA + AMP + H(+). Component of the EKC/KEOPS complex that is required for the formation of a threonylcarbamoyl group on adenosine at position 37 (t(6)A37) in tRNAs that read codons beginning with adenine. The complex is probably involved in the transfer of the threonylcarbamoyl moiety of threonylcarbamoyl-AMP (TC-AMP) to the N6 group of A37. OSGEP likely plays a direct catalytic role in this reaction, but requires other protein(s) of the complex to fulfill this activity. In Danio rerio (Zebrafish), this protein is tRNA N6-adenosine threonylcarbamoyltransferase.